Reading from the N-terminus, the 460-residue chain is Ribosomal protein uS12 methylthiotransferase RimO (460 aa).

Positions 17–128 (PAVAVLHLGC…IVQVIQRAER (112 aa)) constitute an MTTase N-terminal domain. [4Fe-4S] cluster is bound by residues cysteine 26, cysteine 62, cysteine 91, cysteine 166, cysteine 170, and cysteine 173. Residues 152 to 381 (TTHAPVAYLR…MQLQQGIAFR (230 aa)) form the Radical SAM core domain. The 67-residue stretch at 384 to 450 (REQVGQVVPV…PYDLFGQVVE (67 aa)) folds into the TRAM domain.

The protein belongs to the methylthiotransferase family. RimO subfamily. The cofactor is [4Fe-4S] cluster.

The protein resides in the cytoplasm. The enzyme catalyses L-aspartate(89)-[ribosomal protein uS12]-hydrogen + (sulfur carrier)-SH + AH2 + 2 S-adenosyl-L-methionine = 3-methylsulfanyl-L-aspartate(89)-[ribosomal protein uS12]-hydrogen + (sulfur carrier)-H + 5'-deoxyadenosine + L-methionine + A + S-adenosyl-L-homocysteine + 2 H(+). Functionally, catalyzes the methylthiolation of an aspartic acid residue of ribosomal protein uS12. This is Ribosomal protein uS12 methylthiotransferase RimO from Synechococcus sp. (strain JA-3-3Ab) (Cyanobacteria bacterium Yellowstone A-Prime).